A 482-amino-acid polypeptide reads, in one-letter code: Type II methyltransferase M.AvaI (482 aa).

This sequence belongs to the N(4)/N(6)-methyltransferase family. N(4) subfamily.

It carries out the reaction a 2'-deoxycytidine in DNA + S-adenosyl-L-methionine = an N(4)-methyl-2'-deoxycytidine in DNA + S-adenosyl-L-homocysteine + H(+). Functionally, an alpha subtype methylase that recognizes the double-stranded sequence 5'-CYCGRG-3', methylates C-1 on both strands, and protects the DNA from cleavage by the AvaI endonuclease. The sequence is that of Type II methyltransferase M.AvaI from Anabaena variabilis.